The chain runs to 366 residues: D-alanine--D-alanine ligase (366 aa).

The ATP-grasp domain occupies 150–353; it reads KRVLRDAGVP…YPALVDRLIV (204 aa). 180–235 provides a ligand contact to ATP; it reads IGQLGLPLFIKPASQGSSVGVSKVTDRAGFAAALALAFRYDAKVLVEQGISGREIE. 3 residues coordinate Mg(2+): Asp307, Glu320, and Asn322.

It belongs to the D-alanine--D-alanine ligase family. Mg(2+) serves as cofactor. It depends on Mn(2+) as a cofactor.

Its subcellular location is the cytoplasm. The catalysed reaction is 2 D-alanine + ATP = D-alanyl-D-alanine + ADP + phosphate + H(+). Its pathway is cell wall biogenesis; peptidoglycan biosynthesis. Functionally, cell wall formation. This chain is D-alanine--D-alanine ligase, found in Sodalis glossinidius (strain morsitans).